Consider the following 452-residue polypeptide: Trigger factor (452 aa).

The PPIase FKBP-type domain occupies 170–255; sequence GDRVTIDFTG…VKSVAAPGPL (86 aa).

Belongs to the FKBP-type PPIase family. Tig subfamily.

It localises to the cytoplasm. It catalyses the reaction [protein]-peptidylproline (omega=180) = [protein]-peptidylproline (omega=0). Its function is as follows. Involved in protein export. Acts as a chaperone by maintaining the newly synthesized protein in an open conformation. Functions as a peptidyl-prolyl cis-trans isomerase. This Xanthobacter autotrophicus (strain ATCC BAA-1158 / Py2) protein is Trigger factor.